Reading from the N-terminus, the 711-residue chain is MPQDDDWFWGRPTPVVVGDGETTSKPKPPVAGKTKKVEEQHPRRPGEPDCSYYVKFGSCKFGISCVYNHPDPRPQHGADDKKPAEQFPRRPGEPDCSYYVKFGSCKFGMNCRFNHPPRMPVPPQQEYFSGNACHCHHIEGKSKVEQVKLNVLGLPLRPGTGLCSYYMNRGICKFGTNCKFDHPDPGSDHEKWVVSSNANQVSSQVNIYSVLDHGESNEHTFTSEEVHQPGIPSFHQRISYTRDQLLQLCQNVEVPKDILKFCQDINVELNGEDKISGFGAEKDHVQTPSYKRFDATDSRDWHSWSAQTNWEQKFWDNFSEAKEPYSLGWKQEKFNKPDQSSFHFDSKDQWLKFIKCTPCKSTLIKAEVPLSIQRGIISGKDEVLKTLKSILNTFSPKMFDLQKGQLIETRISSADILKDVINLIFEKVVAEPAFCSTYAQLCTYLNQNLTPFPPEDCDCEEITFKQALSNKCQEIFESAHTVCSEIGKLIGQDREMEQRDKERVVKLETLGNINFIRALLKKKLITNKIIDHIVQAVMDCCKFRFEPLGKVDLLNIIFEGMLDSDSAGDESNICVNAMIGGNKSSIASNDVEMTRKNVNRQNEEAILQKSYDEVPNNKMDPQKNYADGAISYLIEKEKPTNLESSVRICRGGCSISEIMELVVDAGAVEGSDEHFMATLLFIKPEYREIFLTLDTREGRLGWLKRMYKVKE.

The tract at residues 1–49 (MPQDDDWFWGRPTPVVVGDGETTSKPKPPVAGKTKKVEEQHPRRPGEPD) is disordered. Positions 35 to 47 (KKVEEQHPRRPGE) are enriched in basic and acidic residues. 3 consecutive C3H1-type zinc fingers follow at residues 44-72 (RPGEPDCSYYVKFGSCKFGISCVYNHPDP), 90-118 (RPGEPDCSYYVKFGSCKFGMNCRFNHPPR), and 157-185 (RPGTGLCSYYMNRGICKFGTNCKFDHPDP). In terms of domain architecture, MIF4G spans 384–637 (LKTLKSILNT…GAISYLIEKE (254 aa)).

In Oryza sativa subsp. japonica (Rice), this protein is Zinc finger CCCH domain-containing protein 43.